The sequence spans 584 residues: Myo-inositol transporter 1 (584 aa).

At 1 to 81 (MGIHIPYLTS…TSVMITFNQS (81 aa)) the chain is on the cytoplasmic side. Threonine 12 is subject to Phosphothreonine. A disordered region spans residues 13-42 (SQSNVGDAVGNADSVEFNSEHDSPSKRGKI). Phosphoserine occurs at positions 26, 31, 35, 37, and 46. Over residues 30 to 42 (NSEHDSPSKRGKI) the composition is skewed to basic and acidic residues. The helical transmembrane segment at 82–102 (LSPFIITLTFVASISGFMFGY) threads the bilayer. The Extracellular segment spans residues 103–129 (DTGYISSALISIGTDLDHKVLTYGEKE). The helical transmembrane segment at 130–150 (IVTAATSLGALITSIFAGTAA) threads the bilayer. At 151–163 (DIFGRKRCLMGSN) the chain is on the cytoplasmic side. A helical membrane pass occupies residues 164–184 (LMFVIGAILQVSAHTFWQMAV). Residues 185 to 186 (GR) are Extracellular-facing. A helical transmembrane segment spans residues 187-207 (LIMGFGVGIGSLIAPLFISEI). Residues 208–215 (APKMIRGR) are Cytoplasmic-facing. A helical transmembrane segment spans residues 216–236 (LTVINSLWLTGGQLVAYGCGA). The Extracellular segment spans residues 237–246 (GLNYVNNGWR). A helical membrane pass occupies residues 247–267 (ILVGLSLIPTAVQFTCLCFLP). At 268 to 349 (DTPRYYVMKG…IGCGLQAIQQ (82 aa)) the chain is on the cytoplasmic side. The helical transmembrane segment at 350-370 (FTGWNSLMYFSGTIFETVGFK) threads the bilayer. N-linked (GlcNAc...) asparagine glycosylation is present at asparagine 371. Residues 371-376 (NSSAVS) are Extracellular-facing. Residues 377 to 397 (IIVSGTNFIFTLVAFFSIDKI) form a helical membrane-spanning segment. At 398-400 (GRR) the chain is on the cytoplasmic side. The helical transmembrane segment at 401–421 (TILLIGLPGMTMALVVCSIAF) threads the bilayer. Over 422 to 441 (HFLGIKFDGAVAVVVSSGFS) the chain is Extracellular. The helical transmembrane segment at 442 to 462 (SWGIVIIVFIIVFAAFYALGI) threads the bilayer. Residues 463–486 (GTVPWQQSELFPQNVRGIGTSYAT) lie on the Cytoplasmic side of the membrane. Residues 487–507 (ATNWAGSLVIASTFLTMLQNI) traverse the membrane as a helical segment. Topologically, residues 508-510 (TPA) are extracellular. Residues 511-531 (GTFAFFAGLSCLSTIFCYFCY) form a helical membrane-spanning segment. Residues 532–584 (PELSGLELEEVQTILKDGFNIKASKALAKKRKQQVARVHELKYEPTQEIIEDI) lie on the Cytoplasmic side of the membrane. A Glycyl lysine isopeptide (Lys-Gly) (interchain with G-Cter in ubiquitin) cross-link involves residue lysine 573.

Belongs to the major facilitator superfamily. Sugar transporter (TC 2.A.1.1) family.

It is found in the cell membrane. It catalyses the reaction myo-inositol(out) + H(+)(out) = myo-inositol(in) + H(+)(in). Functionally, major transporter for myo-inositol. This Saccharomyces cerevisiae (strain ATCC 204508 / S288c) (Baker's yeast) protein is Myo-inositol transporter 1 (ITR1).